We begin with the raw amino-acid sequence, 578 residues long: Proteasome-associated ATPase (578 aa).

Residues 35–84 are a coiled coil; the sequence is RHLTALEEQLGAARTRLAQVSAQNDRLATTLREARDQIVALKAEVDRLGQ. 266 to 271 provides a ligand contact to ATP; sequence GCGKTL. The interval 577-578 is docks into pockets in the proteasome alpha-ring; sequence YL.

This sequence belongs to the AAA ATPase family. As to quaternary structure, homohexamer. Assembles into a hexameric ring structure that caps the 20S proteasome core. Strongly interacts with the prokaryotic ubiquitin-like protein Pup through a hydrophobic interface; the interacting region of ARC lies in its N-terminal coiled-coil domain. There is one Pup binding site per ARC hexamer ring. Upon ATP-binding, the C-terminus of ARC interacts with the alpha-rings of the proteasome core, possibly by binding to the intersubunit pockets.

Its pathway is protein degradation; proteasomal Pup-dependent pathway. Its function is as follows. ATPase which is responsible for recognizing, binding, unfolding and translocation of pupylated proteins into the bacterial 20S proteasome core particle. May be essential for opening the gate of the 20S proteasome via an interaction with its C-terminus, thereby allowing substrate entry and access to the site of proteolysis. Thus, the C-termini of the proteasomal ATPase may function like a 'key in a lock' to induce gate opening and therefore regulate proteolysis. This Kineococcus radiotolerans (strain ATCC BAA-149 / DSM 14245 / SRS30216) protein is Proteasome-associated ATPase.